The chain runs to 257 residues: Adenosylcobinamide-GDP ribazoletransferase (257 aa).

Helical transmembrane passes span 4 to 24, 40 to 60, 64 to 84, 116 to 136, 140 to 160, and 193 to 213; these read AVRG…WWLG, VVGL…QWFF, FVVQ…LLHL, AAVA…AALL, AALA…ALLI, and LFVT…VVAV.

Belongs to the CobS family. It depends on Mg(2+) as a cofactor.

Its subcellular location is the cell inner membrane. It carries out the reaction alpha-ribazole + adenosylcob(III)inamide-GDP = adenosylcob(III)alamin + GMP + H(+). It catalyses the reaction alpha-ribazole 5'-phosphate + adenosylcob(III)inamide-GDP = adenosylcob(III)alamin 5'-phosphate + GMP + H(+). It functions in the pathway cofactor biosynthesis; adenosylcobalamin biosynthesis; adenosylcobalamin from cob(II)yrinate a,c-diamide: step 7/7. Functionally, joins adenosylcobinamide-GDP and alpha-ribazole to generate adenosylcobalamin (Ado-cobalamin). Also synthesizes adenosylcobalamin 5'-phosphate from adenosylcobinamide-GDP and alpha-ribazole 5'-phosphate. In Alkalilimnicola ehrlichii (strain ATCC BAA-1101 / DSM 17681 / MLHE-1), this protein is Adenosylcobinamide-GDP ribazoletransferase.